A 61-amino-acid polypeptide reads, in one-letter code: Probable tautomerase stu1128 (61 aa).

The active-site Proton acceptor; via imino nitrogen is the Pro-2.

The protein belongs to the 4-oxalocrotonate tautomerase family.

In Streptococcus thermophilus (strain ATCC BAA-250 / LMG 18311), this protein is Probable tautomerase stu1128.